The sequence spans 177 residues: Large ribosomal subunit protein uL6 (177 aa).

This sequence belongs to the universal ribosomal protein uL6 family. Part of the 50S ribosomal subunit.

Functionally, this protein binds to the 23S rRNA, and is important in its secondary structure. It is located near the subunit interface in the base of the L7/L12 stalk, and near the tRNA binding site of the peptidyltransferase center. This chain is Large ribosomal subunit protein uL6, found in Aromatoleum aromaticum (strain DSM 19018 / LMG 30748 / EbN1) (Azoarcus sp. (strain EbN1)).